Here is a 396-residue protein sequence, read N- to C-terminus: Ubiquitin-like modifier-activating enzyme 5 (396 aa).

Glycine 76, aspartate 97, lysine 120, asparagine 143, and asparagine 177 together coordinate ATP. Positions 219 and 222 each coordinate Zn(2+). The Glycyl thioester intermediate role is filled by cysteine 243. 2 residues coordinate Zn(2+): cysteine 296 and cysteine 301.

It belongs to the ubiquitin-activating E1 family. UBA5 subfamily.

Its function is as follows. E1-like enzyme which activates UFM1. This chain is Ubiquitin-like modifier-activating enzyme 5, found in Drosophila ananassae (Fruit fly).